We begin with the raw amino-acid sequence, 149 residues long: Gamma-glutamylaminecyclotransferase (149 aa).

Substrate is bound at residue 7–10 (YGTL). The Proton acceptor role is filled by Glu82.

This sequence belongs to the gamma-glutamylcyclotransferase family. As to quaternary structure, monomer.

It catalyses the reaction epsilon-(gamma-L-glutamyl)-L-lysine = 5-oxo-L-proline + L-lysine. Functionally, contributes to degradation of proteins cross-linked by transglutaminases by degrading the cross-link between a lysine and a glutamic acid residue. Catalyzes the formation of 5-oxo-L-proline from L-gamma-glutamyl-L-epsilon-lysine. Inactive with L-gamma-glutamyl-alpha-amino acid substrates such as L-gamma-glutamyl-L-alpha-cysteine and L-gamma-glutamyl-L-alpha-alanine. The protein is Gamma-glutamylaminecyclotransferase (Ggact) of Rattus norvegicus (Rat).